We begin with the raw amino-acid sequence, 192 residues long: Ion-translocating oxidoreductase complex subunit A (192 aa).

Transmembrane regions (helical) follow at residues 5–25 (ILLIIGTALINNFVLVKFLGL), 39–59 (VGMGLATMFVLTVASLCAYLV), 63–83 (ILIPLNATFLRTLVFILVIAV), 102–122 (LLGIFLPLITTNCAVLGVALL), 134–154 (VVYGFGASLGFSLVLVLFAAL), and 171–191 (AIALITAGLMSLAFMGFTGLV).

The protein belongs to the NqrDE/RnfAE family. The complex is composed of six subunits: RnfA, RnfB, RnfC, RnfD, RnfE and RnfG.

The protein localises to the cell inner membrane. Part of a membrane-bound complex that couples electron transfer with translocation of ions across the membrane. In Haemophilus influenzae (strain 86-028NP), this protein is Ion-translocating oxidoreductase complex subunit A.